Here is a 360-residue protein sequence, read N- to C-terminus: Ferredoxin--NADP reductase, leaf isozyme, chloroplastic (360 aa).

The N-terminal 52 residues, 1 to 52 (MAAAVTAAVSLPYSNSTSLPIRTSIVAPERLVFKKVSLNNVSISGRVGTIRA), are a transit peptide targeting the chloroplast. The 123-residue stretch at 81-203 (KEPYVGRCLL…TGPVGKEMLM (123 aa)) folds into the FAD-binding FR-type domain. FAD is bound by residues 139 to 142 (RLYS), 160 to 162 (CVK), Tyr-166, 177 to 179 (VCS), and Thr-218. Ser-142 and Lys-162 together coordinate NADP(+). Residues Thr-218, 250 to 251 (VP), 280 to 281 (SR), Lys-290, 319 to 320 (GL), and Glu-358 each bind NADP(+).

The protein belongs to the ferredoxin--NADP reductase type 1 family. Monomer. Interacts with TIC62 (via C-terminus). It depends on FAD as a cofactor.

The protein localises to the plastid. The protein resides in the chloroplast stroma. It is found in the chloroplast thylakoid membrane. It catalyses the reaction 2 reduced [2Fe-2S]-[ferredoxin] + NADP(+) + H(+) = 2 oxidized [2Fe-2S]-[ferredoxin] + NADPH. Its pathway is energy metabolism; photosynthesis. Its function is as follows. May play a key role in regulating the relative amounts of cyclic and non-cyclic electron flow to meet the demands of the plant for ATP and reducing power. This Pisum sativum (Garden pea) protein is Ferredoxin--NADP reductase, leaf isozyme, chloroplastic (PETH).